The following is an 884-amino-acid chain: Probable LRR receptor-like serine/threonine-protein kinase PAM74 (884 aa).

Positions 1–23 are cleaved as a signal peptide; it reads MDSPCWLLLLLLGAFAIIGCVQA. Over 24–510 the chain is Extracellular; it reads QDQQEFISLD…TEKNSKKKFP (487 aa). Residues Asn143, Asn182, Asn200, Asn256, Asn289, Asn400, Asn403, Asn417, Asn433, Asn444, Asn465, and Asn470 are each glycosylated (N-linked (GlcNAc...) asparagine). LRR repeat units lie at residues 412-433, 436-457, and 460-480; these read RVLS…AIQN, HLEK…FLAQ, and SLVI…QGLR. Residues 511–531 form a helical membrane-spanning segment; the sequence is VVIVASVASVAIIVAVLVIIF. The Cytoplasmic portion of the chain corresponds to 532–884; sequence VLSKKKSSTV…FDTELFPRAR (353 aa). Residue Thr570 is modified to Phosphothreonine. The Protein kinase domain occupies 579 to 852; that stretch reads NNFQRVVGEG…QVANELKECL (274 aa). ATP contacts are provided by residues 585-593 and Lys607; that span reads VGEGGFGVV. Tyr652 is subject to Phosphotyrosine. Catalysis depends on Asp704, which acts as the Proton acceptor. At Ser738 the chain carries Phosphoserine. A phosphothreonine mark is found at Thr739 and Thr744. Tyr752 carries the phosphotyrosine modification.

Belongs to the protein kinase superfamily. Ser/Thr protein kinase family. As to quaternary structure, binds to the ammonium transporter AMT1-1.

It is found in the membrane. The enzyme catalyses L-seryl-[protein] + ATP = O-phospho-L-seryl-[protein] + ADP + H(+). It catalyses the reaction L-threonyl-[protein] + ATP = O-phospho-L-threonyl-[protein] + ADP + H(+). In terms of biological role, required for accurate photosynthesis. The polypeptide is Probable LRR receptor-like serine/threonine-protein kinase PAM74 (PAM74) (Arabidopsis thaliana (Mouse-ear cress)).